We begin with the raw amino-acid sequence, 510 residues long: ATP synthase subunit alpha, chloroplastic (510 aa).

170 to 177 contacts ATP; it reads GDRQTGKT.

Belongs to the ATPase alpha/beta chains family. F-type ATPases have 2 components, CF(1) - the catalytic core - and CF(0) - the membrane proton channel. CF(1) has five subunits: alpha(3), beta(3), gamma(1), delta(1), epsilon(1). CF(0) has four main subunits: a, b, b' and c.

Its subcellular location is the plastid. It is found in the chloroplast thylakoid membrane. The enzyme catalyses ATP + H2O + 4 H(+)(in) = ADP + phosphate + 5 H(+)(out). Functionally, produces ATP from ADP in the presence of a proton gradient across the membrane. The alpha chain is a regulatory subunit. In Lotus japonicus (Lotus corniculatus var. japonicus), this protein is ATP synthase subunit alpha, chloroplastic.